Here is a 479-residue protein sequence, read N- to C-terminus: MMSSLSDLETHASELTSAVKTIISQCPRQNAASRSRTQPLITSSASKEAHRAQQSILSTISGLQKLLTSPTDFLHHLAVQNQLLACLQWLGEFQVLACIPLTGTVPIKDVAELAGVPETHLSRIIRMTATAGFLDEPDPGQVAHSALSAPFVTKPSYLDAVMFLAGTIAPSALQMPTATQRFGASLRPNETAYNLALNNPATFASTSEQRPKLQRQWPAFLQYGTSDTDDRVTDLLSRLDHFRRGSISVVEVSARSLDRATTLANLYPSINITVQIASPAGPTAWSPAHPNPIRPPTPGGSHKHDDLRALTASTASTTPASSHNHTHTHTTNSIPQASNITIQHRLPTAPQPITSANLYILHLPSPSPTVPFASLATHILAELRSHLDILRSNPSATLILTPRPLPEPSAVHSEVEASARLRDLTLMQLANEREIELAEWINLLSNVSDSMGRLVVVNKIQSRESTVVLLEIRYQAYNR.

The HTH iclR-type domain occupies 77–147; sequence LAVQNQLLAC…DPGQVAHSAL (71 aa). Positions 107-126 form a DNA-binding region, H-T-H motif; the sequence is IKDVAELAGVPETHLSRIIR. Disordered stretches follow at residues 281 to 305 and 314 to 333; these read GPTAWSPAHPNPIRPPTPGGSHKHD and TASTTPASSHNHTHTHTTNS. Residues 289–298 show a composition bias toward pro residues; sequence HPNPIRPPTP. Residues 314-323 show a composition bias toward low complexity; that stretch reads TASTTPASSH.

It is found in the nucleus. Transcriptional coactivator; part of the gene cluster that mediates the biosynthesis of monodictyphenone, a prenyl xanthone derivative. With mdpE, coregulates the production of monodictyphenone. The polypeptide is Monodictyphenone cluster transcriptional coactivator mdpA (Emericella nidulans (strain FGSC A4 / ATCC 38163 / CBS 112.46 / NRRL 194 / M139) (Aspergillus nidulans)).